Here is a 190-residue protein sequence, read N- to C-terminus: Holliday junction branch migration complex subunit RuvA (190 aa).

Residues 1-64 form a domain I region; it reads MIGKLSGTLD…EDAQILYGFA (64 aa). The tract at residues 65–137 is domain II; the sequence is TSQERAAFRE…LKGKLGPDIG (73 aa). The tract at residues 137–141 is flexible linker; the sequence is GVAAS. Positions 142-190 are domain III; sequence VANDSQADILQALLALGYSDKEAAAALKALPSDVGVSEGIRLALRALGK.

It belongs to the RuvA family. As to quaternary structure, homotetramer. Forms an RuvA(8)-RuvB(12)-Holliday junction (HJ) complex. HJ DNA is sandwiched between 2 RuvA tetramers; dsDNA enters through RuvA and exits via RuvB. An RuvB hexamer assembles on each DNA strand where it exits the tetramer. Each RuvB hexamer is contacted by two RuvA subunits (via domain III) on 2 adjacent RuvB subunits; this complex drives branch migration. In the full resolvosome a probable DNA-RuvA(4)-RuvB(12)-RuvC(2) complex forms which resolves the HJ.

It localises to the cytoplasm. The RuvA-RuvB-RuvC complex processes Holliday junction (HJ) DNA during genetic recombination and DNA repair, while the RuvA-RuvB complex plays an important role in the rescue of blocked DNA replication forks via replication fork reversal (RFR). RuvA specifically binds to HJ cruciform DNA, conferring on it an open structure. The RuvB hexamer acts as an ATP-dependent pump, pulling dsDNA into and through the RuvAB complex. HJ branch migration allows RuvC to scan DNA until it finds its consensus sequence, where it cleaves and resolves the cruciform DNA. This is Holliday junction branch migration complex subunit RuvA from Albidiferax ferrireducens (strain ATCC BAA-621 / DSM 15236 / T118) (Rhodoferax ferrireducens).